Here is a 199-residue protein sequence, read N- to C-terminus: Probable molybdenum cofactor guanylyltransferase (199 aa).

Residues 6-8 (LAG), Lys-18, Asp-65, and Asp-97 contribute to the GTP site. A Mg(2+)-binding site is contributed by Asp-97.

It belongs to the MobA family. Mg(2+) serves as cofactor.

It localises to the cytoplasm. The enzyme catalyses Mo-molybdopterin + GTP + H(+) = Mo-molybdopterin guanine dinucleotide + diphosphate. Functionally, transfers a GMP moiety from GTP to Mo-molybdopterin (Mo-MPT) cofactor (Moco or molybdenum cofactor) to form Mo-molybdopterin guanine dinucleotide (Mo-MGD) cofactor. The protein is Probable molybdenum cofactor guanylyltransferase of Staphylococcus aureus (strain COL).